Here is a 134-residue protein sequence, read N- to C-terminus: Phosphoribosyl-AMP cyclohydrolase (134 aa).

Aspartate 80 contributes to the Mg(2+) binding site. Cysteine 81 lines the Zn(2+) pocket. The Mg(2+) site is built by aspartate 82 and aspartate 84. Zn(2+) is bound by residues cysteine 98 and cysteine 105.

Belongs to the PRA-CH family. As to quaternary structure, homodimer. Mg(2+) is required as a cofactor. Requires Zn(2+) as cofactor.

The protein localises to the cytoplasm. The enzyme catalyses 1-(5-phospho-beta-D-ribosyl)-5'-AMP + H2O = 1-(5-phospho-beta-D-ribosyl)-5-[(5-phospho-beta-D-ribosylamino)methylideneamino]imidazole-4-carboxamide. Its pathway is amino-acid biosynthesis; L-histidine biosynthesis; L-histidine from 5-phospho-alpha-D-ribose 1-diphosphate: step 3/9. Functionally, catalyzes the hydrolysis of the adenine ring of phosphoribosyl-AMP. The sequence is that of Phosphoribosyl-AMP cyclohydrolase from Bordetella petrii (strain ATCC BAA-461 / DSM 12804 / CCUG 43448).